We begin with the raw amino-acid sequence, 465 residues long: Sorting nexin-8 (465 aa).

Residues 1-19 (MTGRAMDPLPAAAVGAAAE) show a composition bias toward low complexity. Residues 1–36 (MTGRAMDPLPAAAVGAAAEAEADEEADPPASDLPTP) are disordered. The PX domain occupies 73 to 181 (ARDTVQVELI…KLFLSFSGSD (109 aa)). Positions 109, 135, and 148 each coordinate a 1,2-diacyl-sn-glycero-3-phospho-(1D-myo-inositol-3-phosphate). A Phosphothreonine modification is found at Thr452. Ser456 is subject to Phosphoserine.

Belongs to the sorting nexin family.

The protein resides in the early endosome membrane. Functionally, may be involved in several stages of intracellular trafficking. May play a role in intracellular protein transport from early endosomes to the trans-Golgi network. The protein is Sorting nexin-8 (SNX8) of Homo sapiens (Human).